The sequence spans 534 residues: MIWYILVVGILLPQSLAHPGFFTSIGQMTDLIHTEKDLVTSLKDYIKAEEDKLEQIKKWAEKLDRLTSTATKDPEGFVGHPVNAFKLMKRLNTEWSELENLVLKDMSDGFISNLTIQRQYFPNDEDQVGAAKALLRLQDTYNLDTDTISKGDLPGVKHKSFLTVEDCFELGKVAYTEADYYHTELWMEQALRQLDEGEVSTVDKVSVLDYLSYAVYQQGDLDKALLLTKKLLELDPEHQRANGNLKYFEYIMAKEKDANKSSSDDQSDQKTTLKKKGAAVDYLPERQKYEMLCRGEGIKMTPRRQKKLFCRYHDGNRNPKFILAPAKQEDEWDKPRIIRFHDIISDAEIEVVKDLAKPRLRRATISNPITGDLETVHYRISKSAWLSGYENPVVSRINMRIQDLTGLDVSTAEELQVANYGVGGQYEPHFDFARKDEPDAFKELGTGNRIATWLFYMSDVLAGGATVFPEVGASVWPKKGTAVFWYNLFASGEGDYSTRHAACPVLVGNKWVSNKWLHERGQEFRRPCTLSELE.

The N-terminal stretch at 1–17 (MIWYILVVGILLPQSLA) is a signal peptide. Residue Asn113 is glycosylated (N-linked (GlcNAc...) asparagine). One copy of the TPR repeat lies at 205 to 238 (VSVLDYLSYAVYQQGDLDKALLLTKKLLELDPEH). Positions 258–277 (ANKSSSDDQSDQKTTLKKKG) are disordered. The N-linked (GlcNAc...) asparagine glycan is linked to Asn259. Residues 411 to 519 (TAEELQVANY…KWVSNKWLHE (109 aa)) form the Fe2OG dioxygenase domain. Residues His429, Asp431, and His500 each contribute to the Fe cation site. Lys510 provides a ligand contact to 2-oxoglutarate.

Belongs to the P4HA family. Heterotetramer of two alpha-1 chains and two beta chains (P4HB)(the beta chain is the multi-functional PDI), where P4HB plays the role of a structural subunit; this tetramer catalyzes the formation of 4-hydroxyproline in collagen. Fe(2+) serves as cofactor. L-ascorbate is required as a cofactor.

Its subcellular location is the endoplasmic reticulum lumen. It carries out the reaction L-prolyl-[collagen] + 2-oxoglutarate + O2 = trans-4-hydroxy-L-prolyl-[collagen] + succinate + CO2. Its function is as follows. Catalyzes the post-translational formation of 4-hydroxyproline in -Xaa-Pro-Gly- sequences in collagens and other proteins. The sequence is that of Prolyl 4-hydroxylase subunit alpha-1 (P4HA1) from Bos taurus (Bovine).